The following is a 1052-amino-acid chain: Isoleucine--tRNA ligase (1052 aa).

The 'HIGH' region motif lies at P58–H68. The 'KMSKS' region motif lies at K627–S631. Position 630 (K630) interacts with ATP.

This sequence belongs to the class-I aminoacyl-tRNA synthetase family. IleS type 2 subfamily. In terms of assembly, monomer. It depends on Zn(2+) as a cofactor.

It is found in the cytoplasm. It carries out the reaction tRNA(Ile) + L-isoleucine + ATP = L-isoleucyl-tRNA(Ile) + AMP + diphosphate. Its function is as follows. Catalyzes the attachment of isoleucine to tRNA(Ile). As IleRS can inadvertently accommodate and process structurally similar amino acids such as valine, to avoid such errors it has two additional distinct tRNA(Ile)-dependent editing activities. One activity is designated as 'pretransfer' editing and involves the hydrolysis of activated Val-AMP. The other activity is designated 'posttransfer' editing and involves deacylation of mischarged Val-tRNA(Ile). The polypeptide is Isoleucine--tRNA ligase (Corynebacterium diphtheriae (strain ATCC 700971 / NCTC 13129 / Biotype gravis)).